Consider the following 427-residue polypeptide: MNSLRLEPISRVAGEVNLPGSKSVSNRALLLAALARGTTRLTNLLDSDDIRHMLAALTQLGVKYKLSADKTECTVHGLGRSFAVSAPVNLFLGNAGTAMRPLCAALCLGSGEYMLGGEPRMEERPIGHLVDCLALKGAHIQYLKKDGYPPLVVDAKGLWGGDVHVDGSVSSQFLTAFLMAAPAMAPVIPRIHIKGELVSKPYIDITLHIMNSSGVVIEHDNYKLFYIKGNQSIVSPGDFLVEGDASSASYFLAAGAIKGKVRVTGIGKHSIGDIHFADVLERMGARITWGDDFIEAEQGPLHGVDMDMNHIPDXAMTIAXVALFAEGPTSIRNIYNWRVKETDRLHAMATDVRKLGVSEEGDLHYITVTPPTQLKHAEIDTYKHHRIAMCFSLVALSDIAVTINDPGCTSKTFPDYFDKLASVSQAV.

3 residues coordinate 3-phosphoshikimate: lysine 22, serine 23, and arginine 27. Residue lysine 22 participates in phosphoenolpyruvate binding. Glycine 96 and arginine 124 together coordinate phosphoenolpyruvate. 7 residues coordinate 3-phosphoshikimate: serine 170, serine 171, glutamine 172, serine 199, aspartate 313, asparagine 336, and lysine 340. Phosphoenolpyruvate is bound at residue glutamine 172. The Proton acceptor role is filled by aspartate 313. Residues arginine 344, arginine 386, and lysine 411 each contribute to the phosphoenolpyruvate site.

This sequence belongs to the EPSP synthase family. Monomer.

It is found in the cytoplasm. It catalyses the reaction 3-phosphoshikimate + phosphoenolpyruvate = 5-O-(1-carboxyvinyl)-3-phosphoshikimate + phosphate. It functions in the pathway metabolic intermediate biosynthesis; chorismate biosynthesis; chorismate from D-erythrose 4-phosphate and phosphoenolpyruvate: step 6/7. Functionally, catalyzes the transfer of the enolpyruvyl moiety of phosphoenolpyruvate (PEP) to the 5-hydroxyl of shikimate-3-phosphate (S3P) to produce enolpyruvyl shikimate-3-phosphate and inorganic phosphate. In Aeromonas salmonicida, this protein is 3-phosphoshikimate 1-carboxyvinyltransferase.